A 257-amino-acid chain; its full sequence is Type III pantothenate kinase (257 aa).

Position 6–13 (6–13 (DCGNTNTV)) interacts with ATP. A substrate-binding site is contributed by 107–110 (GPDR). Aspartate 109 functions as the Proton acceptor in the catalytic mechanism. Residue aspartate 129 coordinates K(+). An ATP-binding site is contributed by threonine 132. Substrate is bound at residue threonine 184.

Belongs to the type III pantothenate kinase family. In terms of assembly, homodimer. NH4(+) serves as cofactor. The cofactor is K(+).

Its subcellular location is the cytoplasm. The catalysed reaction is (R)-pantothenate + ATP = (R)-4'-phosphopantothenate + ADP + H(+). It participates in cofactor biosynthesis; coenzyme A biosynthesis; CoA from (R)-pantothenate: step 1/5. Its function is as follows. Catalyzes the phosphorylation of pantothenate (Pan), the first step in CoA biosynthesis. This chain is Type III pantothenate kinase, found in Roseobacter denitrificans (strain ATCC 33942 / OCh 114) (Erythrobacter sp. (strain OCh 114)).